Here is a 116-residue protein sequence, read N- to C-terminus: NADH-ubiquinone oxidoreductase chain 3 (116 aa).

Transmembrane regions (helical) follow at residues L3–F23, F56–L76, and P85–H105.

This sequence belongs to the complex I subunit 3 family.

The protein resides in the mitochondrion membrane. It carries out the reaction a ubiquinone + NADH + 5 H(+)(in) = a ubiquinol + NAD(+) + 4 H(+)(out). In terms of biological role, core subunit of the mitochondrial membrane respiratory chain NADH dehydrogenase (Complex I) that is believed to belong to the minimal assembly required for catalysis. Complex I functions in the transfer of electrons from NADH to the respiratory chain. The immediate electron acceptor for the enzyme is believed to be ubiquinone. The polypeptide is NADH-ubiquinone oxidoreductase chain 3 (MT-ND3) (Latimeria chalumnae (Coelacanth)).